The following is a 311-amino-acid chain: Malate dehydrogenase (311 aa).

NAD(+)-binding positions include 7–13 (GAAGGIG) and D34. R81 and R87 together coordinate substrate. NAD(+)-binding positions include N94 and 117–119 (ITN). 2 residues coordinate substrate: N119 and R153. The Proton acceptor role is filled by H177. Residue M227 coordinates NAD(+).

The protein belongs to the LDH/MDH superfamily. MDH type 1 family. In terms of assembly, homodimer.

The catalysed reaction is (S)-malate + NAD(+) = oxaloacetate + NADH + H(+). Functionally, catalyzes the reversible oxidation of malate to oxaloacetate. This chain is Malate dehydrogenase, found in Shewanella loihica (strain ATCC BAA-1088 / PV-4).